The chain runs to 330 residues: Ketol-acid reductoisomerase (NADP(+)) (330 aa).

The region spanning 1–181 is the KARI N-terminal Rossmann domain; it reads MKVLYDDDVN…GLTRAGVIET (181 aa). Residues 24–27, arginine 47, serine 52, and 82–85 contribute to the NADP(+) site; these read YGSQ and DEIQ. Residue histidine 107 is part of the active site. Residue glycine 133 participates in NADP(+) binding. In terms of domain architecture, KARI C-terminal knotted spans 182–327; the sequence is TYREETETDL…KNLRIACGLQ (146 aa). Residues aspartate 190, glutamate 194, glutamate 226, and glutamate 230 each contribute to the Mg(2+) site. Serine 251 contacts substrate.

This sequence belongs to the ketol-acid reductoisomerase family. Mg(2+) serves as cofactor.

The enzyme catalyses (2R)-2,3-dihydroxy-3-methylbutanoate + NADP(+) = (2S)-2-acetolactate + NADPH + H(+). It catalyses the reaction (2R,3R)-2,3-dihydroxy-3-methylpentanoate + NADP(+) = (S)-2-ethyl-2-hydroxy-3-oxobutanoate + NADPH + H(+). The protein operates within amino-acid biosynthesis; L-isoleucine biosynthesis; L-isoleucine from 2-oxobutanoate: step 2/4. It functions in the pathway amino-acid biosynthesis; L-valine biosynthesis; L-valine from pyruvate: step 2/4. In terms of biological role, involved in the biosynthesis of branched-chain amino acids (BCAA). Catalyzes an alkyl-migration followed by a ketol-acid reduction of (S)-2-acetolactate (S2AL) to yield (R)-2,3-dihydroxy-isovalerate. In the isomerase reaction, S2AL is rearranged via a Mg-dependent methyl migration to produce 3-hydroxy-3-methyl-2-ketobutyrate (HMKB). In the reductase reaction, this 2-ketoacid undergoes a metal-dependent reduction by NADPH to yield (R)-2,3-dihydroxy-isovalerate. In Methanosphaera stadtmanae (strain ATCC 43021 / DSM 3091 / JCM 11832 / MCB-3), this protein is Ketol-acid reductoisomerase (NADP(+)).